The following is a 146-amino-acid chain: uncharacterized protein (146 aa).

It to E.coli YmfS.

This is an uncharacterized protein from Escherichia coli (strain K12).